Reading from the N-terminus, the 1162-residue chain is Reticulon-4 (1162 aa).

Position 1 is an N-acetylmethionine (methionine 1). The segment at 1 to 183 (MEDIDQSSLV…ALPAASEPVI (183 aa)) is disordered. Over 1 to 988 (MEDIDQSSLV…LYWRDIKKTG (988 aa)) the chain is Cytoplasmic. 2 positions are modified to phosphoserine: serine 7 and serine 16. The span at 7-16 (SSLVSSSADS) shows a compositional bias: low complexity. Residues 31-54 (EPEDEEDEEDEEEEEDDEDLEELE) show a composition bias toward acidic residues. Residues 85-99 (PPAPRGPLPAAPPTA) show a composition bias toward pro residues. At serine 105 the chain carries Phosphoserine. A compositionally biased stretch (low complexity) spans 109 to 127 (SPAASAPSLPPAAAVLPSK). Serine 145, serine 165, serine 167, serine 329, and serine 344 each carry phosphoserine. Phosphothreonine is present on threonine 348. A compositionally biased stretch (basic and acidic residues) spans 408–422 (SLEQKGHGKDSESRN). Positions 408–432 (SLEQKGHGKDSESRNENASFPRTPE) are disordered. Phosphoserine is present on serine 426. Residue threonine 430 is modified to Phosphothreonine. A phosphoserine mark is found at serine 489, serine 690, serine 727, serine 768, and serine 832. Residues 711–730 (ELVDDSSPESEPVDLFSDDS) are disordered. Residues 713–730 (VDDSSPESEPVDLFSDDS) are compositionally biased toward acidic residues. Phosphothreonine is present on threonine 834. Phosphoserine occurs at positions 857 and 961. The region spanning 975–1162 (VVDLLYWRDI…KIPGLKRKAE (188 aa)) is the Reticulon domain. The helical transmembrane segment at 989-1009 (VVFGASLFLLLSLTVFSIVSV) threads the bilayer. Residues 1010-1078 (TAYIALALLS…VNSTIKELRR (69 aa)) are Lumenal-facing. An N6-acetyllysine modification is found at lysine 1074. The chain crosses the membrane as a helical span at residues 1079–1099 (LFLVDDLVDSLKFAVLMWVFT). Over 1100–1162 (YVGALFNGLT…KIPGLKRKAE (63 aa)) the chain is Cytoplasmic.

Binds to RTN4R. Interacts with ATL1. Interacts with TMEM170A. Interacts with RTN4IP1. In terms of assembly, interacts in trans with CNTNAP1. Interacts with REEP5. Interacts with GPR50. Interacts with synaptic plasticity regulator PANTS; the interaction results in enhanced RTN4-mediated inhibition of AMPA receptor clustering. As to quaternary structure, homodimer. Interacts with BAD/Bcl-xl and BCL2. Interact with RTN3. Interacts with NGBR. Interacts with SPTLC1. Interacts with GRAMD4. Interacts with CDH5. Interacts with BACE1 and BACE2. Interacts with REEP5. Interacts with RETREG3. Interacts with BACE1 and BACE2. Interacts with TMEM33. As to expression, expressed in cardiomyocytes (at protein level). Highly expressed in brain but not deteceted in aorta, femoral and carotid arteries. Main isoform expressed in neurons. Expressed in cardiomyocytes (at protein level). Expressed in splenocytes, T-cells, B-cells, bone marrow derived dendritic cells and macrophages (at protein level). Expressed in neurons. Highly expressed in endothelial cells and vascular smooth muscle cells, including blood vessels and mesenteric arteries. Expressed in bronchial and alveolar epithelial cells as well as vascular endothelial cells of lungs. In terms of tissue distribution, expressed in B-cells, bone marrow dendritic cells and macrophages (at protein level). As to expression, expressed in cardiomyocytes. Expressed at very low levels in neurons.

Its subcellular location is the endoplasmic reticulum membrane. The protein resides in the cell membrane. It is found in the synapse. It localises to the cell junction. In terms of biological role, required to induce the formation and stabilization of endoplasmic reticulum (ER) tubules. They regulate membrane morphogenesis in the ER by promoting tubular ER production. They influence nuclear envelope expansion, nuclear pore complex formation and proper localization of inner nuclear membrane proteins. However each isoform have specific functions mainly depending on their tissue expression specificities. Developmental neurite growth regulatory factor with a role as a negative regulator of axon-axon adhesion and growth, and as a facilitator of neurite branching. Regulates neurite fasciculation, branching and extension in the developing nervous system. Involved in down-regulation of growth, stabilization of wiring and restriction of plasticity in the adult CNS. Regulates the radial migration of cortical neurons via an RTN4R-LINGO1 containing receptor complex. Acts as a negative regulator of central nervous system angiogenesis. Inhibits spreading, migration and sprouting of primary brain microvascular endothelial cells (MVECs). Also induces the retraction of MVECs lamellipodia and filopodia in a ROCK pathway-dependent manner. Its function is as follows. Mainly function in endothelial cells and vascular smooth muscle cells, is also involved in immune system regulation. Modulator of vascular remodeling, promotes the migration of endothelial cells but inhibits the migration of vascular smooth muscle cells. Regulates endothelial sphingolipid biosynthesis with direct effects on vascular function and blood pressure. Inhibits serine palmitoyltransferase, SPTLC1, the rate-limiting enzyme of the novo sphingolipid biosynthetic pathway, thereby controlling production of endothelial sphingosine-1-phosphate (S1P). Required to promote macrophage homing and functions such as cytokine/chemokine gene expression involved in angiogenesis, arteriogenesis and tissue repair. Mediates ICAM1 induced transendothelial migration of leukocytes such as monocytes and neutrophils and acute inflammation. Necessary for immune responses triggered by nucleic acid sensing TLRs, such as TLR9, is required for proper TLR9 location to endolysosomes. Also involved in immune response to LPS. Plays a role in liver regeneration through the modulation of hepatocytes proliferation. Reduces the anti-apoptotic activity of Bcl-xl and Bcl-2. This is likely consecutive to their change in subcellular location, from the mitochondria to the endoplasmic reticulum, after binding and sequestration. With isoform C, inhibits BACE1 activity and amyloid precursor protein processing. Functionally, regulates cardiomyocyte apoptosis upon hypoxic conditions. With isoform B, inhibits BACE1 activity and amyloid precursor protein processing. This chain is Reticulon-4, found in Mus musculus (Mouse).